Reading from the N-terminus, the 637-residue chain is Limonene synthase, chloroplastic (637 aa).

Residues 1–56 (MALLSIVSLQVPKSCGLKSLISSSNVQKALCISTAVPTLRMRRRQKALVINMKLTT) constitute a chloroplast transit peptide. Mg(2+) contacts are provided by Asp-388, Asp-392, and Asp-540. The DDXXD motif signature appears at 388 to 392 (DDIYD).

This sequence belongs to the terpene synthase family. Tpsd subfamily. Requires Mg(2+) as cofactor. Mn(2+) serves as cofactor. It depends on K(+) as a cofactor.

It localises to the plastid. The protein resides in the chloroplast. The enzyme catalyses (2E)-geranyl diphosphate = (4S)-limonene + diphosphate. It functions in the pathway terpene metabolism; oleoresin biosynthesis. In terms of biological role, involved in defensive oleoresin formation in conifers in response to insect attack or other injury. Involved in monoterpene (C10) olefins biosynthesis. The sequence is that of Limonene synthase, chloroplastic (ag10) from Abies grandis (Grand fir).